Here is a 280-residue protein sequence, read N- to C-terminus: Succinate dehydrogenase [ubiquinone] iron-sulfur subunit, mitochondrial (280 aa).

A mitochondrion-targeting transit peptide spans 1–28; that stretch reads MAAVVALSLRRRFPAAALGGARLQACRG. One can recognise a 2Fe-2S ferredoxin-type domain in the interval 40–133; the sequence is KKFAIYRWDP…VSKIYPLPHM (94 aa). 2 positions are modified to N6-acetyllysine: Lys51 and Lys55. 4 residues coordinate [2Fe-2S] cluster: Cys93, Cys98, Cys101, and Cys113. The interaction with SDHAF1 stretch occupies residues 146–218; that stretch reads FYAQYKSIEP…PAVLMQAYRW (73 aa). Residues 176 to 206 form the 4Fe-4S ferredoxin-type domain; the sequence is DREKLDGLYECILCACCSTSCPSYWWNGDKY. [4Fe-4S] cluster-binding residues include Cys186, Cys189, and Cys192. Cys196 lines the [3Fe-4S] cluster pocket. Residue Trp201 participates in a ubiquinone binding. The [3Fe-4S] cluster site is built by Cys243 and Cys249. Cys253 is a [4Fe-4S] cluster binding site.

The protein belongs to the succinate dehydrogenase/fumarate reductase iron-sulfur protein family. As to quaternary structure, component of complex II composed of four subunits: the flavoprotein (FP) SDHA, iron-sulfur protein (IP) SDHB, and a cytochrome b560 composed of SDHC and SDHD. Interacts with SDHAF1; the interaction is required for iron-sulfur cluster incorporation into SDHB. The cofactor is [2Fe-2S] cluster. [3Fe-4S] cluster serves as cofactor. [4Fe-4S] cluster is required as a cofactor.

Its subcellular location is the mitochondrion inner membrane. It catalyses the reaction a quinone + succinate = fumarate + a quinol. The enzyme catalyses (R)-malate + a quinone = enol-oxaloacetate + a quinol. The catalysed reaction is (S)-malate + a quinone = enol-oxaloacetate + a quinol. The protein operates within carbohydrate metabolism; tricarboxylic acid cycle; fumarate from succinate (eukaryal route): step 1/1. Its activity is regulated as follows. Enol-oxaloacetate inhibits the succinate dehydrogenase activity. Its function is as follows. Iron-sulfur protein (IP) subunit of the succinate dehydrogenase complex (mitochondrial respiratory chain complex II), responsible for transferring electrons from succinate to ubiquinone (coenzyme Q). SDH also oxidizes malate to the non-canonical enol form of oxaloacetate, enol-oxaloacetate. Enol-oxaloacetate, which is a potent inhibitor of the succinate dehydrogenase activity, is further isomerized into keto-oxaloacetate. The polypeptide is Succinate dehydrogenase [ubiquinone] iron-sulfur subunit, mitochondrial (SDHB) (Bos taurus (Bovine)).